We begin with the raw amino-acid sequence, 149 residues long: Large ribosomal subunit protein bL9 (149 aa).

N6-acetyllysine is present on K89.

This sequence belongs to the bacterial ribosomal protein bL9 family.

Binds to the 23S rRNA. In Shigella dysenteriae serotype 1 (strain Sd197), this protein is Large ribosomal subunit protein bL9.